The primary structure comprises 1008 residues: Collagen alpha-1(I) chain (1008 aa).

Residues 1–1008 (GGISVPGPMG…PGPPGPPGPP (1008 aa)) form a disordered region. P18, P21, P23, P32, P35, P38, P52, P67, P73, P82, and P88 each carry 4-hydroxyproline. Positions 55–69 (NGDDGEAGKPGRPGE) are enriched in basic and acidic residues. At K91 the chain carries 5-hydroxylysine; alternate. An O-linked (Gal...) hydroxylysine; alternate glycan is attached at K91. Position 97 is a phosphoserine (S97). Positions 105 to 121 (DAGPAGPKGEPGSPGEN) are enriched in low complexity. 4-hydroxyproline is present on residues P115, P118, P124, P133, P139, P160, P169, P172, P199, P202, P214, P220, P229, P235, and P238. The span at 139–157 (PGASGPAGARGNDGAAGAA) shows a compositional bias: low complexity. Positions 159–171 (PPGPTGPAGPPGF) are enriched in pro residues. Over residues 205 to 235 (AGAAGPAGNPGADGQPGAKGANGAPGIAGAP) the composition is skewed to low complexity. The span at 236 to 255 (GFPGRGPSGPQGPSGPGPKG) shows a compositional bias: gly residues. 5-hydroxylysine is present on K254. 8 positions are modified to 4-hydroxyproline: P260, P263, P275, P284, P299, P305, P314, and P320. Gly residues predominate over residues 309–318 (GERGGPGSRG). The residue at position 329 (K329) is a 5-hydroxylysine. 4-hydroxyproline is present on residues P338, P347, P353, P359, P368, P371, P380, P389, P395, P407, P416, P425, P428, P446, P463, P469, P475, P481, P487, P493, P505, P514, P523, P535, P538, P544, P550, and P559. The segment covering 362-388 (KGLTGSPGSPGPDGKTGPPGPAGQDGR) has biased composition (low complexity). Residues 397 to 416 (ARGQAGVMGFPGPKGAAGEP) are compositionally biased toward low complexity. Positions 475-484 (PGEAGKPGEQ) are enriched in low complexity. The segment covering 519-547 (PRGAPGNDGAKGDAGAPGAPGSQGAPGLQ) has biased composition (low complexity). Residue K571 is modified to 5-hydroxylysine. P577, P592, and P598 each carry 4-hydroxyproline. The span at 604–618 (SGPSGPAGPTGARGA) shows a compositional bias: low complexity. S607 bears the Phosphoserine mark. 4-hydroxyproline is present on residues P619, P625, P628, P637, P643, P661, P670, and P679. Over residues 631 to 658 (AGFAGPPGADGQPGAKGEPGDAGAKGDA) the composition is skewed to low complexity. Pro residues predominate over residues 660–672 (PPGPAGPTGPPGP). 5-hydroxylysine is present on K682. A compositionally biased stretch (low complexity) spans 687–703 (SAGPPGATGFPGAAGRV). 2 positions are modified to 4-hydroxyproline: P691 and P697. P705 is modified (3-hydroxyproline). 4-hydroxyproline is present on residues P706, P717, P738, P747, P755, P764, P781, P790, P793, P799, P814, P820, P826, P835, and P841. The span at 731–740 (ETGPAGRPGE) shows a compositional bias: low complexity. Residues 752–764 (KGSPGADGPAGAP) show a composition bias toward low complexity. The segment covering 813-823 (PPGPVGPPGLA) has biased composition (pro residues). A compositionally biased stretch (low complexity) spans 825 to 840 (PPGESGREGSPGAEGS). K850 carries the 5-hydroxylysine modification. Pro residues predominate over residues 858–873 (PGPPGAPGAPGAPGPV). 4-hydroxyproline is present on residues P861, P864, and P867. The span at 894–908 (AGPAGARGPAGPQGP) shows a compositional bias: low complexity. Over residues 909-923 (RGDKGETGEQGDRGI) the composition is skewed to basic and acidic residues. A 5-hydroxylysine modification is found at K912. 5-hydroxylysine; alternate is present on K924. K924 carries O-linked (Gal...) hydroxylysine; alternate glycosylation. 4-hydroxyproline occurs at positions 939, 942, 960, and 975. A compositionally biased stretch (low complexity) spans 942–975 (PGEQGPSGASGPAGPRGPPGSAGSPGKDGLNGLP). P980 is modified (3-hydroxyproline). P981 carries the post-translational modification 4-hydroxyproline. Pro residues predominate over residues 993–1008 (VGPPGPPGPPGPPGPP). P995 carries the post-translational modification 3-hydroxyproline. Residue P996 is modified to 4-hydroxyproline. 3-hydroxyproline is present on P998. The residue at position 999 (P999) is a 4-hydroxyproline. P1001 carries the post-translational modification 3-hydroxyproline. A 4-hydroxyproline mark is found at P1002, P1005, and P1008.

Belongs to the fibrillar collagen family. In terms of assembly, trimers of one alpha 2(I) and two alpha 1(I) chains. Post-translationally, contains mostly 4-hydroxyproline. Proline residues at the third position of the tripeptide repeating unit (G-X-Y) are hydroxylated in some or all of the chains. In terms of processing, contains 3-hydroxyproline at a few sites. This modification occurs on the first proline residue in the sequence motif Gly-Pro-Hyp, where Hyp is 4-hydroxyproline. Lysine residues at the third position of the tripeptide repeating unit (G-X-Y) are 5-hydroxylated in some or all of the chains. Post-translationally, O-glycosylated on hydroxylated lysine residues. The O-linked glycan consists of a Glc-Gal disaccharide. In terms of tissue distribution, expressed in bones.

The protein localises to the secreted. It localises to the extracellular space. Its subcellular location is the extracellular matrix. In terms of biological role, type I collagen is a member of group I collagen (fibrillar forming collagen). This Paramylodon harlani (Harlan's ground sloth) protein is Collagen alpha-1(I) chain.